Reading from the N-terminus, the 185-residue chain is Isopentenyl-diphosphate Delta-isomerase (185 aa).

Residues histidine 27 and histidine 34 each contribute to the Mn(2+) site. One can recognise a Nudix hydrolase domain in the interval 32-168 (PLHLAFSCHL…PWAFSPWLTL (137 aa)). The active site involves cysteine 69. Cysteine 69 lines the Mg(2+) pocket. Residue histidine 71 coordinates Mn(2+). Position 89 (glutamate 89) interacts with Mg(2+). The Mn(2+) site is built by glutamate 118 and glutamate 120. Residue glutamate 120 is part of the active site.

It belongs to the IPP isomerase type 1 family. Mg(2+) serves as cofactor. Mn(2+) is required as a cofactor.

The protein resides in the cytoplasm. The enzyme catalyses isopentenyl diphosphate = dimethylallyl diphosphate. The protein operates within isoprenoid biosynthesis; dimethylallyl diphosphate biosynthesis; dimethylallyl diphosphate from isopentenyl diphosphate: step 1/1. In terms of biological role, catalyzes the 1,3-allylic rearrangement of the homoallylic substrate isopentenyl (IPP) to its highly electrophilic allylic isomer, dimethylallyl diphosphate (DMAPP). The protein is Isopentenyl-diphosphate Delta-isomerase of Leifsonia xyli subsp. xyli (strain CTCB07).